We begin with the raw amino-acid sequence, 208 residues long: Mediator of RNA polymerase II transcription subunit 18 (208 aa).

Ser-66 is subject to Phosphoserine.

The protein belongs to the Mediator complex subunit 18 family. In terms of assembly, component of the Mediator complex, which is composed of MED1, MED4, MED6, MED7, MED8, MED9, MED10, MED11, MED12, MED13, MED13L, MED14, MED15, MED16, MED17, MED18, MED19, MED20, MED21, MED22, MED23, MED24, MED25, MED26, MED27, MED29, MED30, MED31, CCNC, CDK8 and CDC2L6/CDK11. The MED12, MED13, CCNC and CDK8 subunits form a distinct module termed the CDK8 module. Mediator containing the CDK8 module is less active than Mediator lacking this module in supporting transcriptional activation. Individual preparations of the Mediator complex lacking one or more distinct subunits have been variously termed ARC, CRSP, DRIP, PC2, SMCC and TRAP.

Its subcellular location is the nucleus. Component of the Mediator complex, a coactivator involved in the regulated transcription of nearly all RNA polymerase II-dependent genes. Mediator functions as a bridge to convey information from gene-specific regulatory proteins to the basal RNA polymerase II transcription machinery. Mediator is recruited to promoters by direct interactions with regulatory proteins and serves as a scaffold for the assembly of a functional preinitiation complex with RNA polymerase II and the general transcription factors. This Homo sapiens (Human) protein is Mediator of RNA polymerase II transcription subunit 18 (MED18).